The sequence spans 471 residues: Sulfate adenylyltransferase subunit 1 (471 aa).

Positions 22–237 (KELLRFLTCG…LESVQITGAK (216 aa)) constitute a tr-type G domain. A G1 region spans residues 31 to 38 (GSVDDGKS). Position 31-38 (31-38 (GSVDDGKS)) interacts with GTP. Residues 89–93 (GITID) are G2. The segment at 110 to 113 (DTPG) is G3. GTP-binding positions include 110 to 114 (DTPGH) and 165 to 168 (NKMD). The tract at residues 165–168 (NKMD) is G4. The G5 stretch occupies residues 202–204 (SAL).

This sequence belongs to the TRAFAC class translation factor GTPase superfamily. Classic translation factor GTPase family. CysN/NodQ subfamily. In terms of assembly, heterodimer composed of CysD, the smaller subunit, and CysN.

The catalysed reaction is sulfate + ATP + H(+) = adenosine 5'-phosphosulfate + diphosphate. The protein operates within sulfur metabolism; hydrogen sulfide biosynthesis; sulfite from sulfate: step 1/3. With CysD forms the ATP sulfurylase (ATPS) that catalyzes the adenylation of sulfate producing adenosine 5'-phosphosulfate (APS) and diphosphate, the first enzymatic step in sulfur assimilation pathway. APS synthesis involves the formation of a high-energy phosphoric-sulfuric acid anhydride bond driven by GTP hydrolysis by CysN coupled to ATP hydrolysis by CysD. The polypeptide is Sulfate adenylyltransferase subunit 1 (Saccharophagus degradans (strain 2-40 / ATCC 43961 / DSM 17024)).